Reading from the N-terminus, the 134-residue chain is Ribosome-binding factor A (134 aa).

Belongs to the RbfA family. As to quaternary structure, monomer. Binds 30S ribosomal subunits, but not 50S ribosomal subunits or 70S ribosomes.

The protein localises to the cytoplasm. Functionally, one of several proteins that assist in the late maturation steps of the functional core of the 30S ribosomal subunit. Associates with free 30S ribosomal subunits (but not with 30S subunits that are part of 70S ribosomes or polysomes). Required for efficient processing of 16S rRNA. May interact with the 5'-terminal helix region of 16S rRNA. The sequence is that of Ribosome-binding factor A from Rhizobium leguminosarum bv. trifolii (strain WSM2304).